Consider the following 78-residue polypeptide: Large ribosomal subunit protein bL28 (78 aa).

Belongs to the bacterial ribosomal protein bL28 family.

This Trichormus variabilis (strain ATCC 29413 / PCC 7937) (Anabaena variabilis) protein is Large ribosomal subunit protein bL28.